We begin with the raw amino-acid sequence, 284 residues long: UPF0276 protein Ping_0944 (284 aa).

It belongs to the UPF0276 family.

This chain is UPF0276 protein Ping_0944, found in Psychromonas ingrahamii (strain DSM 17664 / CCUG 51855 / 37).